The primary structure comprises 413 residues: Histidine--tRNA ligase (413 aa).

This sequence belongs to the class-II aminoacyl-tRNA synthetase family. In terms of assembly, homodimer.

It localises to the cytoplasm. The catalysed reaction is tRNA(His) + L-histidine + ATP = L-histidyl-tRNA(His) + AMP + diphosphate + H(+). This is Histidine--tRNA ligase from Ehrlichia chaffeensis (strain ATCC CRL-10679 / Arkansas).